A 297-amino-acid chain; its full sequence is Aspartate carbamoyltransferase catalytic subunit (297 aa).

2 residues coordinate carbamoyl phosphate: Arg49 and Thr50. An L-aspartate-binding site is contributed by Lys77. Carbamoyl phosphate contacts are provided by Arg99, His129, and Gln132. The L-aspartate site is built by Arg162 and Arg215. Gly256 and Pro257 together coordinate carbamoyl phosphate.

This sequence belongs to the aspartate/ornithine carbamoyltransferase superfamily. ATCase family. As to quaternary structure, heterododecamer (2C3:3R2) of six catalytic PyrB chains organized as two trimers (C3), and six regulatory PyrI chains organized as three dimers (R2).

The enzyme catalyses carbamoyl phosphate + L-aspartate = N-carbamoyl-L-aspartate + phosphate + H(+). The protein operates within pyrimidine metabolism; UMP biosynthesis via de novo pathway; (S)-dihydroorotate from bicarbonate: step 2/3. In terms of biological role, catalyzes the condensation of carbamoyl phosphate and aspartate to form carbamoyl aspartate and inorganic phosphate, the committed step in the de novo pyrimidine nucleotide biosynthesis pathway. The sequence is that of Aspartate carbamoyltransferase catalytic subunit from Legionella pneumophila subsp. pneumophila (strain Philadelphia 1 / ATCC 33152 / DSM 7513).